The chain runs to 240 residues: Enoyl-CoA delta isomerase 1, peroxisomal (240 aa).

The Microbody targeting signal motif lies at 238–240 (SKL).

The protein belongs to the enoyl-CoA hydratase/isomerase family.

It is found in the peroxisome. The enzyme catalyses a (3Z)-enoyl-CoA = a 4-saturated (2E)-enoyl-CoA. It catalyses the reaction a (3E)-enoyl-CoA = a 4-saturated (2E)-enoyl-CoA. It functions in the pathway lipid metabolism; fatty acid beta-oxidation. Functionally, able to isomerize both 3-cis and 3-trans double bonds into the 2-trans form in a range of enoyl-CoA species. Essential for the beta oxidation of unsaturated fatty acids. This chain is Enoyl-CoA delta isomerase 1, peroxisomal, found in Arabidopsis thaliana (Mouse-ear cress).